Here is a 246-residue protein sequence, read N- to C-terminus: Carboxylesterase (246 aa).

Residue serine 93 is the Nucleophile of the active site. Active-site charge relay system residues include aspartate 192 and histidine 222.

The protein belongs to the lipase/esterase LIP3/BchO family. Homodimer.

The catalysed reaction is a carboxylic ester + H2O = an alcohol + a carboxylate + H(+). Its function is as follows. Involved in the detoxification of xenobiotics. Shows maximal activity with C6 substrates, with gradually decreasing activity from C8 to C12 substrates. No activity for higher chain length substrates acids rather than long-chain ones. The sequence is that of Carboxylesterase (est) from Bacillus subtilis (strain 168).